The following is a 56-amino-acid chain: Large ribosomal subunit protein bL33 (56 aa).

Belongs to the bacterial ribosomal protein bL33 family.

This is Large ribosomal subunit protein bL33 from Glaesserella parasuis serovar 5 (strain SH0165) (Haemophilus parasuis).